The sequence spans 390 residues: Succinate--CoA ligase [ADP-forming] subunit beta (390 aa).

In terms of domain architecture, ATP-grasp spans 9–248 (KDILRKFGVT…TSEEDPFEVE (240 aa)). ATP is bound by residues Lys-50, 57 to 59 (GRG), Glu-103, Met-106, and Glu-111. 2 residues coordinate Mg(2+): Asn-203 and Asp-217. Substrate contacts are provided by residues Asn-268 and 325–327 (GIV).

The protein belongs to the succinate/malate CoA ligase beta subunit family. In terms of assembly, heterotetramer of two alpha and two beta subunits. Requires Mg(2+) as cofactor.

It catalyses the reaction succinate + ATP + CoA = succinyl-CoA + ADP + phosphate. The catalysed reaction is GTP + succinate + CoA = succinyl-CoA + GDP + phosphate. It participates in carbohydrate metabolism; tricarboxylic acid cycle; succinate from succinyl-CoA (ligase route): step 1/1. Its function is as follows. Succinyl-CoA synthetase functions in the citric acid cycle (TCA), coupling the hydrolysis of succinyl-CoA to the synthesis of either ATP or GTP and thus represents the only step of substrate-level phosphorylation in the TCA. The beta subunit provides nucleotide specificity of the enzyme and binds the substrate succinate, while the binding sites for coenzyme A and phosphate are found in the alpha subunit. This chain is Succinate--CoA ligase [ADP-forming] subunit beta, found in Chlorobium chlorochromatii (strain CaD3).